Consider the following 302-residue polypeptide: Sulfate adenylyltransferase subunit 2 (302 aa).

The protein belongs to the PAPS reductase family. CysD subfamily. As to quaternary structure, heterodimer composed of CysD, the smaller subunit, and CysN.

The enzyme catalyses sulfate + ATP + H(+) = adenosine 5'-phosphosulfate + diphosphate. It functions in the pathway sulfur metabolism; hydrogen sulfide biosynthesis; sulfite from sulfate: step 1/3. Functionally, with CysN forms the ATP sulfurylase (ATPS) that catalyzes the adenylation of sulfate producing adenosine 5'-phosphosulfate (APS) and diphosphate, the first enzymatic step in sulfur assimilation pathway. APS synthesis involves the formation of a high-energy phosphoric-sulfuric acid anhydride bond driven by GTP hydrolysis by CysN coupled to ATP hydrolysis by CysD. This Escherichia coli O7:K1 (strain IAI39 / ExPEC) protein is Sulfate adenylyltransferase subunit 2.